The following is a 461-amino-acid chain: Argininosuccinate lyase (461 aa).

It belongs to the lyase 1 family. Argininosuccinate lyase subfamily.

Its subcellular location is the cytoplasm. The enzyme catalyses 2-(N(omega)-L-arginino)succinate = fumarate + L-arginine. The protein operates within amino-acid biosynthesis; L-arginine biosynthesis; L-arginine from L-ornithine and carbamoyl phosphate: step 3/3. The sequence is that of Argininosuccinate lyase from Dehalococcoides mccartyi (strain CBDB1).